The sequence spans 596 residues: MTSPSPRIQIISTDSAVASPQRIQIVTDQQTGQKIQIVTAVDASGSPKQQFILTSPDGAGTGKVILASPETSSAKQLIFTTSDNLVPGRIQIVTDSASVERLLGKTDVQRPQVVEYCVVCGDKASGRHYGAVSCEGCKGFFKRSVRKNLTYSCRSNQDCIINKHHRNRCQFCRLKKCLEMGMKMESVQSERKPFDVQREKPSNCAASTEKIYIRKDLRSPLIATPTFVADKDGARQTGLLDPGMLVNIQQPLIREDGTVLLATDSKAETSQGALGTLANVVTSLANLSESLNNGDTSEIQPEDQSASEITRAFDTLAKALNTTDSSSSPSLADGIDTSGGGSIHVISRDQSTPIIEVEGPLLSDTHVTFKLTMPSPMPEYLNVHYICESASRLLFLSMHWARSIPAFQALGQDCNTSLVRACWNELFTLGLAQCAQVMSLSTILAAIVNHLQNSIQEDKLSGDRIKQVMEHIWKLQEFCNSMAKLDIDGYEYAYLKAIVLFSPDHPGLTSTSQIEKFQEKAQMELQDYVQKTYSEDTYRLARILVRLPALRLMSSNITEELFFTGLIGNVSIDSIIPYILKMETAEYNGQITGASL.

Phosphoserine; by MAPK is present on Ser-19. The residue at position 46 (Ser-46) is a Phosphoserine. Phosphoserine; by MAPK is present on residues Ser-55 and Ser-68. Ser-98 carries the post-translational modification Phosphoserine. The nuclear receptor DNA-binding region spans 114 to 189; that stretch reads VEYCVVCGDK…MGMKMESVQS (76 aa). NR C4-type zinc fingers lie at residues 117 to 137 and 153 to 177; these read CVVCGDKASGRHYGAVSCEGC and CRSNQDCIINKHHRNRCQFCRLKKC. Lys-192 is covalently cross-linked (Glycyl lysine isopeptide (Lys-Gly) (interchain with G-Cter in SUMO2)). Ser-219 carries the post-translational modification Phosphoserine. N6-acetyllysine is present on Lys-231. One can recognise an NR LBD domain in the interval 341–583; sequence GSIHVISRDQ…SIIPYILKME (243 aa).

It belongs to the nuclear hormone receptor family. NR2 subfamily. In terms of assembly, homodimer; can bind DNA as homodimer. Heterodimer; binds DNA as a heterodimer with NR2C1 required for chromatin remodeling and for binding to promoter regions such as globin DR1 repeats. Interacts with PCAF; the interaction preferentially occurs on the non-phosphorylated form and induces NR2C2-mediated transactivation activity and does not require the ligand-binding domain. Interacts (MAPK-mediated phosphorylated form) with NRIP1; the interaction promotes repression of NR2C2-mediated activity. Interacts with NR2C2AP; the interaction represses selective NR2C2-mediated transcriptional activity. Interacts with NLRP10. Interacts (via ligand-binding region) with transcriptional corepressor JAZF1; the interaction promotes NR2C2-mediated transcriptional repression. Phosphorylation on Ser-19 and Ser-68 is an important regulator of NR2C2-mediated transcriptional activity. Phosphorylation on these residues recruits the corepressor, NRIP1, leading to transcripional repression, whereas the non-phosphorylated form preferentially recruits the coactivator, PCAF.

Its subcellular location is the nucleus. Its function is as follows. Orphan nuclear receptor that can act as a repressor or activator of transcription. An important repressor of nuclear receptor signaling pathways such as retinoic acid receptor, retinoid X, vitamin D3 receptor, thyroid hormone receptor and estrogen receptor pathways. May regulate gene expression during the late phase of spermatogenesis. Together with NR2C1, forms the core of the DRED (direct repeat erythroid-definitive) complex that represses embryonic and fetal globin transcription including that of GATA1. Binds to hormone response elements (HREs) consisting of two 5'-AGGTCA-3' half site direct repeat consensus sequences. Plays a fundamental role in early embryonic development and embryonic stem cells. Required for normal spermatogenesis and cerebellum development. Appears to be important for neurodevelopmentally regulated behavior. Activates transcriptional activity of LHCG. Antagonist of PPARA-mediated transactivation. This chain is Nuclear receptor subfamily 2 group C member 2 (NR2C2), found in Homo sapiens (Human).